The chain runs to 298 residues: Acetylglutamate kinase (298 aa).

Residues 69-70, R91, and N196 contribute to the substrate site; that span reads GG.

Belongs to the acetylglutamate kinase family. ArgB subfamily.

It localises to the cytoplasm. The enzyme catalyses N-acetyl-L-glutamate + ATP = N-acetyl-L-glutamyl 5-phosphate + ADP. Its pathway is amino-acid biosynthesis; L-arginine biosynthesis; N(2)-acetyl-L-ornithine from L-glutamate: step 2/4. In terms of biological role, catalyzes the ATP-dependent phosphorylation of N-acetyl-L-glutamate. This chain is Acetylglutamate kinase, found in Rhodopseudomonas palustris (strain BisA53).